A 233-amino-acid polypeptide reads, in one-letter code: Homeobox protein EMX1 (233 aa).

Positions 135-194 (PKRIRTAFSPSQLLRLERAFEKNHYVVGAERKQLASSLSLSETQVKVWFQNRRTKYKRQK) form a DNA-binding region, homeobox. The tract at residues 192–233 (RQKLEEEGPDSDQKKKGSHHINRWRLATKQPNGEDIDVTSND) is disordered. Basic and acidic residues predominate over residues 193–206 (QKLEEEGPDSDQKK).

This sequence belongs to the EMX homeobox family.

Its subcellular location is the nucleus. Its function is as follows. May function in combinations with OTX1/2 to specify cell fates in the developing central nervous system. In Xenopus tropicalis (Western clawed frog), this protein is Homeobox protein EMX1 (emx1).